The primary structure comprises 278 residues: Large ribosomal subunit protein uL2 (278 aa).

The interval 201-278 (HGNINDGKAG…IMRSRHQRKK (78 aa)) is disordered. Positions 210–221 (GRSRWRGKRPHV) are enriched in basic residues.

This sequence belongs to the universal ribosomal protein uL2 family. Part of the 50S ribosomal subunit. Forms a bridge to the 30S subunit in the 70S ribosome.

Functionally, one of the primary rRNA binding proteins. Required for association of the 30S and 50S subunits to form the 70S ribosome, for tRNA binding and peptide bond formation. It has been suggested to have peptidyltransferase activity; this is somewhat controversial. Makes several contacts with the 16S rRNA in the 70S ribosome. The protein is Large ribosomal subunit protein uL2 of Rhizobium meliloti (strain 1021) (Ensifer meliloti).